Reading from the N-terminus, the 247-residue chain is ATP synthase subunit a, chloroplastic (247 aa).

Helical transmembrane passes span Q38–V58, V95–L115, I134–S154, L199–L219, and G220–G240.

Belongs to the ATPase A chain family. F-type ATPases have 2 components, CF(1) - the catalytic core - and CF(0) - the membrane proton channel. CF(1) has five subunits: alpha(3), beta(3), gamma(1), delta(1), epsilon(1). CF(0) has four main subunits: a, b, b' and c.

It localises to the plastid. Its subcellular location is the chloroplast thylakoid membrane. Functionally, key component of the proton channel; it plays a direct role in the translocation of protons across the membrane. The sequence is that of ATP synthase subunit a, chloroplastic from Agrostis stolonifera (Creeping bentgrass).